The sequence spans 64 residues: Basic secretory protease (64 aa).

A divalent metal cation is required as a cofactor. Glycosylated.

With respect to regulation, inhibited by EDTA. Its function is as follows. Metalloprotease, digests gelatin and azocasein (in vitro). The chain is Basic secretory protease from Boswellia serrata (Indian frankincense).